The following is a 232-amino-acid chain: Enolase-phosphatase E1 (232 aa).

It belongs to the HAD-like hydrolase superfamily. MasA/MtnC family. Monomer. The cofactor is Mg(2+).

The enzyme catalyses 5-methylsulfanyl-2,3-dioxopentyl phosphate + H2O = 1,2-dihydroxy-5-(methylsulfanyl)pent-1-en-3-one + phosphate. It participates in amino-acid biosynthesis; L-methionine biosynthesis via salvage pathway; L-methionine from S-methyl-5-thio-alpha-D-ribose 1-phosphate: step 3/6. The protein operates within amino-acid biosynthesis; L-methionine biosynthesis via salvage pathway; L-methionine from S-methyl-5-thio-alpha-D-ribose 1-phosphate: step 4/6. Functionally, bifunctional enzyme that catalyzes the enolization of 2,3-diketo-5-methylthiopentyl-1-phosphate (DK-MTP-1-P) into the intermediate 2-hydroxy-3-keto-5-methylthiopentenyl-1-phosphate (HK-MTPenyl-1-P), which is then dephosphorylated to form the acireductone 1,2-dihydroxy-3-keto-5-methylthiopentene (DHK-MTPene). This chain is Enolase-phosphatase E1, found in Xylella fastidiosa (strain M12).